The sequence spans 44 residues: Defensin-like protein 1 (44 aa).

Pyrrolidone carboxylic acid is present on Gln1. A disulfide bond links Cys15 and Cys36.

The protein belongs to the DEFL family. As to quaternary structure, forms oligomers in its native state.

The protein localises to the secreted. In terms of biological role, possesses antifungal activity sensitive to inorganic cations. This chain is Defensin-like protein 1 (AFP1), found in Brassica napus (Rape).